Reading from the N-terminus, the 127-residue chain is uncharacterized protein (127 aa).

The disordered stretch occupies residues 1–34; it reads MKNPESSGVSSSPQIQRVSPSSSSTSPSPPSIGT. The span at 9–34 shows a compositional bias: low complexity; sequence VSSSPQIQRVSPSSSSTSPSPPSIGT. 2 consecutive transmembrane segments (helical) span residues 47–67 and 84–104; these read IAAVVVAVDVVDIMSVDPLAM and TIAVDSITLLYTPICLCYLLV.

Its subcellular location is the membrane. This is an uncharacterized protein from Saccharomyces cerevisiae (strain ATCC 204508 / S288c) (Baker's yeast).